The sequence spans 274 residues: MLSVAARSGPFAPVLSATSRGVAGALRPLLQGAVPAASEPPVLDVKRPFLCRESLSGQAAARPLVATVGLNVPASVRFSHTDVKVPDFSDYRRAEVLDSTKSSKESSEARKGFSYLVTATTTVGVAYAAKNVVSQFVSSMSASADVLAMSKIEIKLSDIPEGKNMAFKWRGKPLFVRHRTKKEIDQEAAVEVSQLRDPQHDLDRVKKPEWVILIGVCTHLGCVPIANAGDFGGYYCPCHGSHYDASGRIRKGPAPLNLEVPAYEFTSDDVVVVG.

Residues 79–110 lie on the Mitochondrial matrix side of the membrane; that stretch reads SHTDVKVPDFSDYRRAEVLDSTKSSKESSEAR. The helical transmembrane segment at 111–137 threads the bilayer; that stretch reads KGFSYLVTATTTVGVAYAAKNVVSQFV. The Mitochondrial intermembrane segment spans residues 138–274; the sequence is SSMSASADVL…FTSDDVVVVG (137 aa). One can recognise a Rieske domain in the interval 187 to 272; it reads EAAVEVSQLR…YEFTSDDVVV (86 aa). [2Fe-2S] cluster is bound by residues cysteine 217, histidine 219, cysteine 236, histidine 239, and serine 241. Cysteine 222 and cysteine 238 form a disulfide bridge.

The protein belongs to the Rieske iron-sulfur protein family. In terms of assembly, component of the ubiquinol-cytochrome c oxidoreductase (cytochrome b-c1 complex, complex III, CIII), a multisubunit enzyme composed of 11 subunits. The complex is composed of 3 respiratory subunits cytochrome b, cytochrome c1 and Rieske protein UQCRFS1, 2 core protein subunits UQCRC1/QCR1 and UQCRC2/QCR2, and 6 low-molecular weight protein subunits UQCRH/QCR6, UQCRB/QCR7, UQCRQ/QCR8, UQCR10/QCR9, UQCR11/QCR10 and subunit 9, the cleavage product of Rieske protein UQCRFS1. The complex exists as an obligatory dimer and forms supercomplexes (SCs) in the inner mitochondrial membrane with NADH-ubiquinone oxidoreductase (complex I, CI) and cytochrome c oxidase (complex IV, CIV), resulting in different assemblies (supercomplex SCI(1)III(2)IV(1) and megacomplex MCI(2)III(2)IV(2)). Incorporation of the Rieske protein UQCRFS1 is the penultimate step in complex III assembly. Interacts with TTC19, which is involved in the clearance of UQCRFS1 fragments. As to quaternary structure, component of the ubiquinol-cytochrome c oxidoreductase (cytochrome b-c1 complex, complex III, CIII). Subunit 9 corresponds to the mitochondrial targeting sequence (MTS) of Rieske protein UQCRFS1. It is retained after processing and incorporated inside complex III, where it remains bound to the complex and localizes between the 2 core subunits UQCRC1/QCR1 and UQCRC2/QCR2. [2Fe-2S] cluster is required as a cofactor. In terms of processing, proteolytic processing is necessary for the correct insertion of UQCRFS1 in the complex III dimer. Several fragments are generated during UQCRFS1 insertion, most probably due to the endogenous matrix-processing peptidase (MPP) activity of the 2 core protein subunits UQCRC1/QCR1 and UQCRC2/QCR2, which are homologous to the 2 mitochondrial-processing peptidase (MPP) subunits beta-MPP and alpha-MPP respectively. The action of the protease is also necessary for the clearance of the UQCRFS1 fragments.

Its subcellular location is the mitochondrion inner membrane. It carries out the reaction a quinol + 2 Fe(III)-[cytochrome c](out) = a quinone + 2 Fe(II)-[cytochrome c](out) + 2 H(+)(out). In terms of biological role, component of the ubiquinol-cytochrome c oxidoreductase, a multisubunit transmembrane complex that is part of the mitochondrial electron transport chain which drives oxidative phosphorylation. The respiratory chain contains 3 multisubunit complexes succinate dehydrogenase (complex II, CII), ubiquinol-cytochrome c oxidoreductase (cytochrome b-c1 complex, complex III, CIII) and cytochrome c oxidase (complex IV, CIV), that cooperate to transfer electrons derived from NADH and succinate to molecular oxygen, creating an electrochemical gradient over the inner membrane that drives transmembrane transport and the ATP synthase. The cytochrome b-c1 complex catalyzes electron transfer from ubiquinol to cytochrome c, linking this redox reaction to translocation of protons across the mitochondrial inner membrane, with protons being carried across the membrane as hydrogens on the quinol. In the process called Q cycle, 2 protons are consumed from the matrix, 4 protons are released into the intermembrane space and 2 electrons are passed to cytochrome c. The Rieske protein is a catalytic core subunit containing a [2Fe-2S] iron-sulfur cluster. It cycles between 2 conformational states during catalysis to transfer electrons from the quinol bound in the Q(0) site in cytochrome b to cytochrome c1. Incorporation of UQCRFS1 is the penultimate step in complex III assembly. Component of the ubiquinol-cytochrome c oxidoreductase (cytochrome b-c1 complex, complex III, CIII). UQCRFS1 undergoes proteolytic processing once it is incorporated in the complex III dimer. One of the fragments, called subunit 9, corresponds to its mitochondrial targeting sequence (MTS). The proteolytic processing is necessary for the correct insertion of UQCRFS1 in the complex III dimer, but the persistence of UQCRFS1-derived fragments may prevent newly imported UQCRFS1 to be processed and assembled into complex III and is detrimental for the complex III structure and function. The chain is Cytochrome b-c1 complex subunit Rieske, mitochondrial from Mus musculus (Mouse).